We begin with the raw amino-acid sequence, 183 residues long: Efficient mitochondria targeting-associated protein 19 (183 aa).

Residues 1-25 are Cytoplasmic-facing; that stretch reads MKVVSLRRIYSSEIYKLPTTRLHMD. Residues 24–156 form the EXPERA domain; the sequence is MDTLYYYYFV…PYLAIPLWMA (133 aa). A helical membrane pass occupies residues 26–46; sequence TLYYYYFVSHLAAALFVDLPI. The Lumenal portion of the chain corresponds to 47 to 81; sequence TEWLGGSLSCLSGLRRFYLSTYEDPILLIPAPWKT. The helical transmembrane segment at 82–102 threads the bilayer; that stretch reads ALFSSELFFQVPFFIWVSLRL. The Cytoplasmic segment spans residues 103–110; the sequence is RKKARDPV. The chain crosses the membrane as a helical span at residues 111–131; it reads LWVAILIYGVHAFTTTWCCMF. The Lumenal portion of the chain corresponds to 132–138; that stretch reads ELFAEKK. Residues 139–159 form a helical membrane-spanning segment; it reads WMIMSFYFPYLAIPLWMAIDM. Topologically, residues 160 to 183 are cytoplasmic; sequence GGRLVKSCHAAKSGPSSTITSKSD.

This sequence belongs to the TMEM97/sigma-2 receptor family.

It is found in the endoplasmic reticulum membrane. In terms of biological role, part of an import route for newly synthesized mitochondrial proteins termed the ER-SURF pathway (ER surface-mediated protein targeting), which retrieves mitochondrial precursor proteins from the ER surface and reroutes them to mitochondria for efficient mitochondrial import. Acts as a quality control factor in the ER, promoting the proteolytic degradation of nonproductive and extramitochondrial precursor proteins in the ER membrane thus removing them from the ER surface. This is Efficient mitochondria targeting-associated protein 19 (ema19) from Schizosaccharomyces pombe (strain 972 / ATCC 24843) (Fission yeast).